Reading from the N-terminus, the 485-residue chain is RAC-beta serine/threonine-protein kinase B (485 aa).

A PH domain is found at 5 to 109 (MVIKEGWLQK…WIIAIQTVAN (105 aa)). O-linked (GlcNAc) serine glycans are attached at residues Ser132 and Ser135. In terms of domain architecture, Protein kinase spans 156-413 (FDYLKLLGKG…AQEVMSHGFF (258 aa)). Residues 162–170 (LGKGTFGKV) and Lys185 contribute to the ATP site. The Proton acceptor role is filled by Asp279. The O-linked (GlcNAc) threonine glycan is linked to Thr310. Residue Thr313 is modified to Phosphothreonine. Thr317 is a glycosylation site (O-linked (GlcNAc) threonine). Positions 414 to 485 (ASINWQDVTE…QFSYSSSIRE (72 aa)) constitute an AGC-kinase C-terminal domain. The interval 454-485 (LTPPDRYDNLDALESEQRPHFPQFSYSSSIRE) is disordered. The span at 458 to 472 (DRYDNLDALESEQRP) shows a compositional bias: basic and acidic residues. Ser478 carries the post-translational modification Phosphoserine. Ser478 carries O-linked (GlcNAc) serine; alternate glycosylation.

The protein belongs to the protein kinase superfamily. AGC Ser/Thr protein kinase family. RAC subfamily. Phosphorylation on Thr-313 and Ser-478 is required for full activity. Phosphorylation of the activation loop at Thr-313 by PDPK1/PDK1 is a prerequisite for full activation. Phosphorylation by mTORC2 at Ser-478 in response to growth factors plays a key role in AKT1 activation by facilitating subsequent phosphorylation of the activation loop by PDPK1/PDK1.

It carries out the reaction L-seryl-[protein] + ATP = O-phospho-L-seryl-[protein] + ADP + H(+). The catalysed reaction is L-threonyl-[protein] + ATP = O-phospho-L-threonyl-[protein] + ADP + H(+). With respect to regulation, two specific sites, one in the kinase domain (Thr-313) and the other in the C-terminal regulatory region (Ser-478), need to be phosphorylated for its full activation. Akt2-b is one of several closely related serine/threonine-protein kinases known as the AKT kinase, and which regulate many processes including metabolism, proliferation, cell survival, growth and angiogenesis. This is mediated through serine and/or threonine phosphorylation of a range of downstream substrates. Over 100 substrate candidates have been reported so far, but for most of them, no isoform specificity has been reported. May be involved in the inhibition of ciliogenesis. In Xenopus laevis (African clawed frog), this protein is RAC-beta serine/threonine-protein kinase B (akt2-b).